The chain runs to 418 residues: F-box protein At1g10780 (418 aa).

The region spanning M1 to N47 is the F-box domain.

This chain is F-box protein At1g10780, found in Arabidopsis thaliana (Mouse-ear cress).